A 372-amino-acid polypeptide reads, in one-letter code: Protein RecA (372 aa).

Residue 81 to 88 (GPESSGKT) coordinates ATP.

It belongs to the RecA family.

It is found in the cytoplasm. In terms of biological role, can catalyze the hydrolysis of ATP in the presence of single-stranded DNA, the ATP-dependent uptake of single-stranded DNA by duplex DNA, and the ATP-dependent hybridization of homologous single-stranded DNAs. It interacts with LexA causing its activation and leading to its autocatalytic cleavage. The chain is Protein RecA from Haemophilus ducreyi (strain 35000HP / ATCC 700724).